The chain runs to 151 residues: Superoxide dismutase [Cu-Zn] 2 (151 aa).

His44, His46, and His61 together coordinate Cu cation. A disulfide bridge connects residues Cys55 and Cys144. 4 residues coordinate Zn(2+): His61, His69, His78, and Asp81. His118 is a Cu cation binding site.

It belongs to the Cu-Zn superoxide dismutase family. Homodimer. The cofactor is Cu cation. Zn(2+) serves as cofactor.

Its subcellular location is the cytoplasm. It catalyses the reaction 2 superoxide + 2 H(+) = H2O2 + O2. Functionally, destroys radicals which are normally produced within the cells and which are toxic to biological systems. In Zea mays (Maize), this protein is Superoxide dismutase [Cu-Zn] 2 (SODCC.1).